A 222-amino-acid chain; its full sequence is Peroxiredoxin (222 aa).

One can recognise a Thioredoxin domain in the interval 2-157; it reads VVLGQKFPEV…ILRLVEALQT (156 aa). Cys-44 (cysteine sulfenic acid (-SOH) intermediate) is an active-site residue. A substrate-binding site is contributed by Arg-120. Cys-211 and Cys-217 are disulfide-bonded.

The protein belongs to the peroxiredoxin family. Prx6 subfamily. Homodecamer. Pentamer of dimers that assemble into a ring structure.

It is found in the cytoplasm. It catalyses the reaction a hydroperoxide + [thioredoxin]-dithiol = an alcohol + [thioredoxin]-disulfide + H2O. Thiol-specific peroxidase that catalyzes the reduction of hydrogen peroxide and organic hydroperoxides to water and alcohols, respectively. Plays a role in cell protection against oxidative stress by detoxifying peroxides. This chain is Peroxiredoxin, found in Nanoarchaeum equitans (strain Kin4-M).